We begin with the raw amino-acid sequence, 248 residues long: Probable transcriptional regulatory protein ECH_0704 (248 aa).

The tract at residues 1–21 (MAGHSQFANIKHRKGAQDAKR) is disordered.

The protein belongs to the TACO1 family.

The protein localises to the cytoplasm. This chain is Probable transcriptional regulatory protein ECH_0704, found in Ehrlichia chaffeensis (strain ATCC CRL-10679 / Arkansas).